The primary structure comprises 338 residues: L-lysine 2,3-aminomutase (338 aa).

The Radical SAM core domain occupies 107–330 (HKYRNRLLFM…PKLAREIAGE (224 aa)). Positions 121, 125, and 128 each coordinate [4Fe-4S] cluster. Lys-333 carries the post-translational modification N6-(pyridoxal phosphate)lysine.

This sequence belongs to the radical SAM superfamily. KamA family. The cofactor is [4Fe-4S] cluster. Pyridoxal 5'-phosphate is required as a cofactor.

It carries out the reaction L-lysine = D-beta-lysine. Its function is as follows. With EpmA is involved in the beta-lysylation step of the post-translational modification of translation elongation factor P (EF-P) on 'Lys-34'. EpmB appears to act before EpmA. Displays lysine 2,3-aminomutase activity, producing (R)-beta-lysine from (S)-alpha-lysine (L-lysine). The protein is L-lysine 2,3-aminomutase (epmB) of Haemophilus influenzae (strain ATCC 51907 / DSM 11121 / KW20 / Rd).